The chain runs to 31 residues: Cytochrome b6-f complex subunit 6 (31 aa).

Residues 4–24 traverse the membrane as a helical segment; sequence VIAYLGLLASVLIGTIVIYLG.

It belongs to the PetL family. As to quaternary structure, the 4 large subunits of the cytochrome b6-f complex are cytochrome b6, subunit IV (17 kDa polypeptide, PetD), cytochrome f and the Rieske protein, while the 4 small subunits are PetG, PetL, PetM and PetN. The complex functions as a dimer.

It is found in the plastid. It localises to the chloroplast thylakoid membrane. Functionally, component of the cytochrome b6-f complex, which mediates electron transfer between photosystem II (PSII) and photosystem I (PSI), cyclic electron flow around PSI, and state transitions. PetL is important for photoautotrophic growth as well as for electron transfer efficiency and stability of the cytochrome b6-f complex. The sequence is that of Cytochrome b6-f complex subunit 6 from Oltmannsiellopsis viridis (Marine flagellate).